The sequence spans 860 residues: MVKDKAPDLSKHTPMMRQYLALKANHPNTLLFYRMGDFYELFHEDAEKAARLLDITLTTRGQSAGVPIKMCGIPFHSLEPYLARLVKLGESAVICEQIGDPATSKGPVERAVARIVTPGTLTDAALIDDKQDLWLLAVTTHRNTAGIARLNLASGEFILIEVPTEQIPATLERIRPAEILYPESWTPNFGVDVARTRQPDWYFEFDSARRLLCDQFEVASLAGFGAEGLKPAIAAAGALLQYAQATQSGKLPHLRGLTVEIEGAYLGLDLATRRNLELTETLRGQPSPTLFSLLDNCVTSMGSRLLRHTLHHPLRARDIPAARHGAVEALLEDYGRLGNEVRKALRGIADIERIAGRVALRNARPRDLASLRESVARLEGLRAPLSDSPAPLIAQLFTELETPYPALELLVRAIAAEPGAQVRDGGVIAPGYDPDLDELRSLNDNCGAFLVDMEARERERSGIASLKVEYNKVHGFYIEVTHANVDKIPDDYRRRQTLKNAERYITPELKAFEDKALSAQERSLAREKLLYEAILDALLPVVPTLQTIARAIAQLDLLAGFAESALKRNWCKPEFAAETQLSITGGRHPVVEGELTNQAETFIANDCLLAENRRLLLITGPNMGGKSTYMRQVALIALLAHIGCYVPADRCVLGPLDRIFTRIGASDDLASGRSTFMVEMTEAAAILHHATNQSLVLMDEIGRGTSTFDGMALAFAILRHLIEKNQSLTLFATHYFELTRLSHEYSELANVHLGAVEHNDRIVFMHAVEEGPANQSYGIQVAALAGIPTAVVRAARKQLREFEQRAAVDPLQPDLFAQGAPEPAEPEPHPVVEQLAAIDPDSLTPREALDALYALKGLLR.

620–627 (GPNMGGKS) is a binding site for ATP.

This sequence belongs to the DNA mismatch repair MutS family.

This protein is involved in the repair of mismatches in DNA. It is possible that it carries out the mismatch recognition step. This protein has a weak ATPase activity. This Dechloromonas aromatica (strain RCB) protein is DNA mismatch repair protein MutS.